Here is a 398-residue protein sequence, read N- to C-terminus: Ubiquitin-like modifier-activating enzyme 5 (398 aa).

Positions 79, 100, 123, 146, and 180 each coordinate ATP. Cys-222 and Cys-225 together coordinate Zn(2+). Cys-246 acts as the Glycyl thioester intermediate in catalysis. 2 residues coordinate Zn(2+): Cys-299 and Cys-304. A UFM1-interacting sequence (UIS) motif is present at residues 330 to 342; that stretch reads VVHEDNEWGIELV. A linker region spans residues 343–373; sequence SEVTEAELQDASGPIPDLPEGITVAYTIPEK. The UFC1-binding sequence (UFC) motif lies at 383-398; it reads ETEQSLEELMAQMKKI.

It belongs to the ubiquitin-activating E1 family. UBA5 subfamily. Homodimer; homodimerization is required for ufm1 activation. Interacts (via UIS motif) with ufm1; binds ufm1 via a trans-binding mechanism in which ufm1 interacts with distinct sites in both subunits of the uba5 homodimer. Interacts (via C-terminus) with ufc1.

It is found in the cytoplasm. The protein localises to the nucleus. It localises to the endoplasmic reticulum membrane. Its subcellular location is the golgi apparatus. Its function is as follows. E1-like enzyme which specifically catalyzes the first step in ufmylation. Activates ufm1 by first adenylating its C-terminal glycine residue with ATP, and thereafter linking this residue to the side chain of a cysteine residue in E1, yielding a ufm1-E1 thioester and free AMP. Activates ufm1 via a trans-binding mechanism, in which ufm1 interacts with distinct sites in both subunits of the uba5 homodimer. Trans-binding also promotes stabilization of the uba5 homodimer, and enhances ATP-binding. Transfer of ufm1 from uba5 to the E2-like enzyme UFC1 also takes place using a trans mechanism. Ufmylation plays a key role in various processes, such as ribosome recycling, response to DNA damage, interferon response or reticulophagy (also called ER-phagy). The protein is Ubiquitin-like modifier-activating enzyme 5 of Danio rerio (Zebrafish).